The following is a 231-amino-acid chain: MTEPNDTGPALQAEHLGKVYDEGPARIEVLSDVSLSVARGEMVAIVGASGSGKSTLLHILGLLDVPSSGTVSVDGVPAAGLSEKRKSALRNRSLGFVYQFHHLLPEFSALDNVAMPLIVRRENRDRARAQAREVLELVGLAAREEHFPGQLSGGERQRVALARALVTRPACVLADEPTGNLDRHTAHNMFELLTRVNRESGTAFVIVTHDPELAARADRQLHMENGRLQPD.

The region spanning 11–231 (LQAEHLGKVY…HMENGRLQPD (221 aa)) is the ABC transporter domain. 47-54 (GASGSGKS) provides a ligand contact to ATP.

This sequence belongs to the ABC transporter superfamily. Lipoprotein translocase (TC 3.A.1.125) family. The complex is composed of two ATP-binding proteins (LolD) and two transmembrane proteins (LolC and LolE).

It localises to the cell inner membrane. Functionally, part of the ABC transporter complex LolCDE involved in the translocation of mature outer membrane-directed lipoproteins, from the inner membrane to the periplasmic chaperone, LolA. Responsible for the formation of the LolA-lipoprotein complex in an ATP-dependent manner. This chain is Lipoprotein-releasing system ATP-binding protein LolD, found in Bordetella bronchiseptica (strain ATCC BAA-588 / NCTC 13252 / RB50) (Alcaligenes bronchisepticus).